A 325-amino-acid polypeptide reads, in one-letter code: Beta-ketoacyl-[acyl-carrier-protein] synthase III (325 aa).

Residues Cys112 and His250 contribute to the active site. The interval 251–255 (QANSR) is ACP-binding. Asn280 is an active-site residue.

This sequence belongs to the thiolase-like superfamily. FabH family. In terms of assembly, homodimer.

It localises to the cytoplasm. The enzyme catalyses malonyl-[ACP] + acetyl-CoA + H(+) = 3-oxobutanoyl-[ACP] + CO2 + CoA. The protein operates within lipid metabolism; fatty acid biosynthesis. In terms of biological role, catalyzes the condensation reaction of fatty acid synthesis by the addition to an acyl acceptor of two carbons from malonyl-ACP. Catalyzes the first condensation reaction which initiates fatty acid synthesis and may therefore play a role in governing the total rate of fatty acid production. Possesses both acetoacetyl-ACP synthase and acetyl transacylase activities. Its substrate specificity determines the biosynthesis of branched-chain and/or straight-chain of fatty acids. This is Beta-ketoacyl-[acyl-carrier-protein] synthase III from Lactococcus lactis subsp. cremoris (strain MG1363).